The chain runs to 300 residues: Ribonuclease HIII (300 aa).

The 218-residue stretch at 83–300 folds into the RNase H type-2 domain; the sequence is IPIIGSDEVG…THKAQALLTK (218 aa). Residues aspartate 89, glutamate 90, and aspartate 194 each contribute to the a divalent metal cation site.

The protein belongs to the RNase HII family. RnhC subfamily. Mn(2+) is required as a cofactor. Mg(2+) serves as cofactor.

It localises to the cytoplasm. It catalyses the reaction Endonucleolytic cleavage to 5'-phosphomonoester.. In terms of biological role, endonuclease that specifically degrades the RNA of RNA-DNA hybrids. In Streptococcus pyogenes serotype M28 (strain MGAS6180), this protein is Ribonuclease HIII.